We begin with the raw amino-acid sequence, 218 residues long: Pyridoxine/pyridoxamine 5'-phosphate oxidase (218 aa).

Substrate contacts are provided by residues 14–17 and K72; that span reads RREY. FMN is bound by residues 67-72, 82-83, R88, K89, and Q111; these read RIVLLK and YT. The substrate site is built by Y129, R133, and S137. FMN-binding positions include 146–147 and W191; that span reads QS. Residue 197 to 199 participates in substrate binding; sequence RLH. R201 serves as a coordination point for FMN.

It belongs to the pyridoxamine 5'-phosphate oxidase family. As to quaternary structure, homodimer. It depends on FMN as a cofactor.

The catalysed reaction is pyridoxamine 5'-phosphate + O2 + H2O = pyridoxal 5'-phosphate + H2O2 + NH4(+). It catalyses the reaction pyridoxine 5'-phosphate + O2 = pyridoxal 5'-phosphate + H2O2. It functions in the pathway cofactor metabolism; pyridoxal 5'-phosphate salvage; pyridoxal 5'-phosphate from pyridoxamine 5'-phosphate: step 1/1. The protein operates within cofactor metabolism; pyridoxal 5'-phosphate salvage; pyridoxal 5'-phosphate from pyridoxine 5'-phosphate: step 1/1. Catalyzes the oxidation of either pyridoxine 5'-phosphate (PNP) or pyridoxamine 5'-phosphate (PMP) into pyridoxal 5'-phosphate (PLP). The sequence is that of Pyridoxine/pyridoxamine 5'-phosphate oxidase from Escherichia coli O45:K1 (strain S88 / ExPEC).